A 115-amino-acid polypeptide reads, in one-letter code: NAD(P)H-quinone oxidoreductase subunit M (115 aa).

Belongs to the complex I NdhM subunit family. As to quaternary structure, NDH-1 can be composed of about 15 different subunits; different subcomplexes with different compositions have been identified which probably have different functions.

It localises to the cellular thylakoid membrane. The catalysed reaction is a plastoquinone + NADH + (n+1) H(+)(in) = a plastoquinol + NAD(+) + n H(+)(out). The enzyme catalyses a plastoquinone + NADPH + (n+1) H(+)(in) = a plastoquinol + NADP(+) + n H(+)(out). In terms of biological role, NDH-1 shuttles electrons from an unknown electron donor, via FMN and iron-sulfur (Fe-S) centers, to quinones in the respiratory and/or the photosynthetic chain. The immediate electron acceptor for the enzyme in this species is believed to be plastoquinone. Couples the redox reaction to proton translocation, and thus conserves the redox energy in a proton gradient. Cyanobacterial NDH-1 also plays a role in inorganic carbon-concentration. This chain is NAD(P)H-quinone oxidoreductase subunit M, found in Prochlorococcus marinus (strain MIT 9211).